A 225-amino-acid chain; its full sequence is Putative amino-acid transporter YggA (225 aa).

The next 5 helical transmembrane spans lie at 1 to 21 (MFAT…PIGA), 37 to 57 (LLTA…GVFG), 65 to 85 (SPIG…WFGI), 116 to 136 (LGVT…LGSF), and 150 to 170 (AVAM…AVVL).

This sequence belongs to the LysE/ArgO transporter (TC 2.A.75) family.

It localises to the cell membrane. The polypeptide is Putative amino-acid transporter YggA (Aeromonas hydrophila).